The primary structure comprises 119 residues: Acidic phospholipase A2 CM-II (119 aa).

Residues Tyr25, Gly27, and Gly29 each contribute to the Ca(2+) site. Residue His45 is part of the active site. Asp46 contributes to the Ca(2+) binding site. Asp87 is a catalytic residue.

The protein belongs to the phospholipase A2 family. Group II subfamily. D49 sub-subfamily. It depends on Ca(2+) as a cofactor. Post-translationally, contains 6 disulfide bonds. Expressed by the venom gland.

It is found in the secreted. It carries out the reaction a 1,2-diacyl-sn-glycero-3-phosphocholine + H2O = a 1-acyl-sn-glycero-3-phosphocholine + a fatty acid + H(+). PLA2 catalyzes the calcium-dependent hydrolysis of the 2-acyl groups in 3-sn-phosphoglycerides. The sequence is that of Acidic phospholipase A2 CM-II from Bitis nasicornis (Rhinoceros adder).